We begin with the raw amino-acid sequence, 837 residues long: Vacuolar membrane protease (837 aa).

Over 1–36 the chain is Cytoplasmic; it reads MSEEEVHDTSSEASEVFTNQPNAFVRGVRSIFGYRK. The helical transmembrane segment at 37 to 57 threads the bilayer; it reads TSLTLFVILTIVVTAGLSFYD. Residues 58-355 are Vacuolar-facing; the sequence is NSLELTIELP…FATPISALAR (298 aa). An N-linked (GlcNAc...) asparagine glycan is attached at Asn143. 2 residues coordinate Zn(2+): His157 and Asp169. The Proton acceptor role is filled by Glu201. Zn(2+) is bound by residues Glu202, Glu227, and His299. A helical membrane pass occupies residues 356-376; the sequence is VNLVLLVLFPVVSTPLLFVIV. Residues 377 to 384 lie on the Cytoplasmic side of the membrane; the sequence is KYKKWKLR. Residues 385-405 traverse the membrane as a helical segment; that stretch reads VTNFLGVPLAMGLAVAVGQVG. The Vacuolar segment spans residues 406–415; the sequence is NPMLVSSHPM. A helical transmembrane segment spans residues 416 to 436; the sequence is MVVATTTSIVVLVYYVVLNGV. At 437 to 446 the chain is on the cytoplasmic side; that stretch reads DWVNTSSDQK. The chain crosses the membrane as a helical span at residues 447–467; the sequence is LVTMIEVSFVYWVVLVYVTWS. Residues 468–474 are Vacuolar-facing; sequence GGDHTGE. A helical membrane pass occupies residues 475–495; that stretch reads FGVTVLFFVQASTSLLGLIGW. The Cytoplasmic portion of the chain corresponds to 496-539; the sequence is TFTRVRGGDEPLLSGEEERYGTEDERDTEKPLVEHNYDWSLQYL. Residues 540-560 traverse the membrane as a helical segment; that stretch reads LIVPVSSLVVYNSGWLVLEGV. Asn561 carries N-linked (GlcNAc...) asparagine glycosylation. Residues 561 to 572 lie on the Vacuolar side of the membrane; it reads NKTVQESLASEH. Residues 573 to 593 form a helical membrane-spanning segment; sequence LIYWIVVVFSQFLVLPVVPFI. At 594-598 the chain is on the cytoplasmic side; it reads TKFNR. The helical transmembrane segment at 599–619 threads the bilayer; the sequence is YIVLGLSVVVVVGVLMSMAVH. Residues 620-837 lie on the Vacuolar side of the membrane; that stretch reads PFNQGSPMKL…LVGVVKHVDV (218 aa). Asn689 carries an N-linked (GlcNAc...) asparagine glycan.

Belongs to the peptidase M28 family. Zn(2+) serves as cofactor.

Its subcellular location is the vacuole membrane. Functionally, may be involved in vacuolar sorting and osmoregulation. This chain is Vacuolar membrane protease, found in Candida albicans (strain SC5314 / ATCC MYA-2876) (Yeast).